Consider the following 90-residue polypeptide: MLTTRRVRFYGRVQGINFRSNTLVKALELGVKGWIKNLPDGSVEALFSGESEQIEKLISYCVSNMPYAEVKRYDVYIEPYTEFQDFQIKR.

In terms of domain architecture, Acylphosphatase-like spans 4–90 (TRRVRFYGRV…TEFQDFQIKR (87 aa)). Residues R19 and N37 contribute to the active site.

Belongs to the acylphosphatase family.

The enzyme catalyses an acyl phosphate + H2O = a carboxylate + phosphate + H(+). The chain is Acylphosphatase (acyP) from Thermoplasma volcanium (strain ATCC 51530 / DSM 4299 / JCM 9571 / NBRC 15438 / GSS1).